Here is a 659-residue protein sequence, read N- to C-terminus: Protein SCARECROW 1 (659 aa).

2 disordered regions span residues 1–33 (MGSS…ITSL) and 188–285 (SDPA…KQRD). Over residues 190–228 (PAPPPPPPPSHPALLPPDATAPPPPPTSVAALPPPPPPQ) the composition is skewed to pro residues. The segment covering 258–271 (AAAAAAAAAAALAA) has biased composition (low complexity). Residues 258 to 289 (AAAAAAAAAAALAAAKERKEEQRRKQRDEEGL) adopt a coiled-coil conformation. Basic and acidic residues predominate over residues 272-285 (AKERKEEQRRKQRD). The 371-residue stretch at 282–652 (KQRDEEGLHL…LCLLTASAWR (371 aa)) folds into the GRAS domain. The interval 289 to 353 (LHLLTLLLQC…VSSCLGLYAP (65 aa)) is leucine repeat I (LRI). The LxCxE motif signature appears at 296–300 (LQCAE). Residues 372–437 (FQVFNGISPF…GGPPRVRLTG (66 aa)) form a VHIID region. The VHIID signature appears at 403 to 407 (VHIID). The segment at 447–479 (ATGKRLSDFADTLGLPFEFCPVADKAGNLDPEK) is leucine repeat II (LRII). The interval 488–575 (VAVHWLRHSL…QQLLSREIRN (88 aa)) is PFYRE. Residues 578–652 (AVGGPARTGD…LCLLTASAWR (75 aa)) form an SAW region.

This sequence belongs to the GRAS family. Interacts with SHR1, but not with SHR2.

The protein resides in the nucleus. Its function is as follows. Transcription factor required for quiescent center cells specification and maintenance of surrounding stem cells, and for the asymmetric cell division involved in radial pattern formation in roots. Essential for cell division but not differentiation of the ground tissue. Regulates the radial organization of the shoot axial organs. Restricts SHR movment and sequesters it into the nucleus of the endodermis. In Oryza sativa subsp. indica (Rice), this protein is Protein SCARECROW 1 (SCR1).